Consider the following 100-residue polypeptide: Small ribosomal subunit protein uS14c (100 aa).

It belongs to the universal ribosomal protein uS14 family. Part of the 30S ribosomal subunit.

The protein localises to the plastid. Functionally, binds 16S rRNA, required for the assembly of 30S particles. The protein is Small ribosomal subunit protein uS14c of Epifagus virginiana (Beechdrops).